The sequence spans 190 residues: ATP synthase subunit delta (190 aa).

Belongs to the ATPase delta chain family. In terms of assembly, F-type ATPases have 2 components, F(1) - the catalytic core - and F(0) - the membrane proton channel. F(1) has five subunits: alpha(3), beta(3), gamma(1), delta(1), epsilon(1). F(0) has three main subunits: a(1), b(2) and c(10-14). The alpha and beta chains form an alternating ring which encloses part of the gamma chain. F(1) is attached to F(0) by a central stalk formed by the gamma and epsilon chains, while a peripheral stalk is formed by the delta and b chains.

It is found in the cell inner membrane. F(1)F(0) ATP synthase produces ATP from ADP in the presence of a proton or sodium gradient. F-type ATPases consist of two structural domains, F(1) containing the extramembraneous catalytic core and F(0) containing the membrane proton channel, linked together by a central stalk and a peripheral stalk. During catalysis, ATP synthesis in the catalytic domain of F(1) is coupled via a rotary mechanism of the central stalk subunits to proton translocation. Its function is as follows. This protein is part of the stalk that links CF(0) to CF(1). It either transmits conformational changes from CF(0) to CF(1) or is implicated in proton conduction. In Beijerinckia indica subsp. indica (strain ATCC 9039 / DSM 1715 / NCIMB 8712), this protein is ATP synthase subunit delta.